A 127-amino-acid chain; its full sequence is Ribosome-binding factor A (127 aa).

It belongs to the RbfA family. Monomer. Binds 30S ribosomal subunits, but not 50S ribosomal subunits or 70S ribosomes.

The protein resides in the cytoplasm. In terms of biological role, one of several proteins that assist in the late maturation steps of the functional core of the 30S ribosomal subunit. Associates with free 30S ribosomal subunits (but not with 30S subunits that are part of 70S ribosomes or polysomes). Required for efficient processing of 16S rRNA. May interact with the 5'-terminal helix region of 16S rRNA. The sequence is that of Ribosome-binding factor A from Chloroflexus aggregans (strain MD-66 / DSM 9485).